The sequence spans 416 residues: D-amino acid dehydrogenase (416 aa).

3–17 (VVILGAGVIGVTSAW) contributes to the FAD binding site.

It belongs to the DadA oxidoreductase family. Requires FAD as cofactor.

The catalysed reaction is a D-alpha-amino acid + A + H2O = a 2-oxocarboxylate + AH2 + NH4(+). Its pathway is amino-acid degradation; D-alanine degradation; NH(3) and pyruvate from D-alanine: step 1/1. Oxidative deamination of D-amino acids. The protein is D-amino acid dehydrogenase of Rhizorhabdus wittichii (strain DSM 6014 / CCUG 31198 / JCM 15750 / NBRC 105917 / EY 4224 / RW1) (Sphingomonas wittichii).